The primary structure comprises 218 residues: Thiopurine S-methyltransferase (218 aa).

Tryptophan 10, leucine 45, glutamate 66, and arginine 123 together coordinate S-adenosyl-L-methionine.

The protein belongs to the class I-like SAM-binding methyltransferase superfamily. TPMT family.

It is found in the cytoplasm. It carries out the reaction S-adenosyl-L-methionine + a thiopurine = S-adenosyl-L-homocysteine + a thiopurine S-methylether.. This Pseudomonas fluorescens (strain SBW25) protein is Thiopurine S-methyltransferase.